A 259-amino-acid chain; its full sequence is uncharacterized protein (259 aa).

3 disordered regions span residues 22 to 68 (GLQP…VSFG), 111 to 133 (REEQ…DEVE), and 181 to 202 (LGGK…KKKQ). The segment covering 50–63 (NEEEDAISDMEDKE) has biased composition (acidic residues). Ser127 bears the Phosphoserine mark.

This is an uncharacterized protein from Schizosaccharomyces pombe (strain 972 / ATCC 24843) (Fission yeast).